The sequence spans 96 residues: Citrate lyase acyl carrier protein (96 aa).

Ser14 carries the O-(phosphoribosyl dephospho-coenzyme A)serine modification.

This sequence belongs to the CitD family. In terms of assembly, oligomer with a subunit composition of (alpha,beta,gamma)6.

The protein localises to the cytoplasm. Covalent carrier of the coenzyme of citrate lyase. This chain is Citrate lyase acyl carrier protein, found in Pectobacterium atrosepticum (strain SCRI 1043 / ATCC BAA-672) (Erwinia carotovora subsp. atroseptica).